We begin with the raw amino-acid sequence, 210 residues long: Mating-type-like protein A1 (210 aa).

The segment at residues 141–200 (SKKKRQRLDNSTKEFLEKVFEKNKQPNRRERELIAEKHGVSLSQIRVWFTNKRMRKKEPK) is a DNA-binding region (homeobox).

Belongs to the MATA1 family. As to quaternary structure, forms a heterodimer with ALPHA2.

Its subcellular location is the nucleus. In terms of biological role, mating type proteins are sequence specific DNA-binding proteins that act as master switches in yeast differentiation by controlling gene expression in a cell type-specific fashion. Transcriptional corepressor that acts in conjunction with ALPHA2 to repress transcription both of homozygote-specific genes and of genes necessary for the white-opaque switch, a prerequisite for mating. This is Mating-type-like protein A1 (MTLA1) from Candida albicans (strain SC5314 / ATCC MYA-2876) (Yeast).